The following is a 362-amino-acid chain: Phosphoserine aminotransferase (362 aa).

Position 43 (R43) interacts with L-glutamate. Residues 77 to 78 (AT), W103, T153, D173, and Q196 contribute to the pyridoxal 5'-phosphate site. The residue at position 197 (K197) is an N6-(pyridoxal phosphate)lysine. 238-239 (NT) contacts pyridoxal 5'-phosphate.

This sequence belongs to the class-V pyridoxal-phosphate-dependent aminotransferase family. SerC subfamily. As to quaternary structure, homodimer. It depends on pyridoxal 5'-phosphate as a cofactor.

It localises to the cytoplasm. It catalyses the reaction O-phospho-L-serine + 2-oxoglutarate = 3-phosphooxypyruvate + L-glutamate. It carries out the reaction 4-(phosphooxy)-L-threonine + 2-oxoglutarate = (R)-3-hydroxy-2-oxo-4-phosphooxybutanoate + L-glutamate. It functions in the pathway amino-acid biosynthesis; L-serine biosynthesis; L-serine from 3-phospho-D-glycerate: step 2/3. Its pathway is cofactor biosynthesis; pyridoxine 5'-phosphate biosynthesis; pyridoxine 5'-phosphate from D-erythrose 4-phosphate: step 3/5. In terms of biological role, catalyzes the reversible conversion of 3-phosphohydroxypyruvate to phosphoserine and of 3-hydroxy-2-oxo-4-phosphonooxybutanoate to phosphohydroxythreonine. This is Phosphoserine aminotransferase from Xylella fastidiosa (strain Temecula1 / ATCC 700964).